A 634-amino-acid polypeptide reads, in one-letter code: Carbon monoxide dehydrogenase 2 (634 aa).

[4Fe-4S] cluster contacts are provided by cysteine 44, cysteine 53, cysteine 56, cysteine 61, and cysteine 73. The [Ni-4Fe-5S] cluster site is built by histidine 264, cysteine 343, cysteine 453, cysteine 484, and cysteine 525.

This sequence belongs to the Ni-containing carbon monoxide dehydrogenase family. Homodimer. [4Fe-4S] cluster is required as a cofactor. Requires [Ni-4Fe-5S] cluster as cofactor.

It carries out the reaction CO + 2 oxidized [2Fe-2S]-[ferredoxin] + H2O = 2 reduced [2Fe-2S]-[ferredoxin] + CO2 + 2 H(+). In terms of biological role, CODH oxidizes carbon monoxide coupled, via CooF, to the reduction of a hydrogen cation by a hydrogenase (possibly CooH). This Methanosarcina mazei (strain ATCC BAA-159 / DSM 3647 / Goe1 / Go1 / JCM 11833 / OCM 88) (Methanosarcina frisia) protein is Carbon monoxide dehydrogenase 2 (cooS2).